The following is a 698-amino-acid chain: tRNA (guanine(37)-N(1))-methyltransferase (698 aa).

Residues 233–254 (DSTAHDSVQRNEGKTPKGPLDG) form a disordered region. Residues 234–247 (STAHDSVQRNEGKT) show a composition bias toward basic and acidic residues. S-adenosyl-L-methionine contacts are provided by residues Arg-394, 432-433 (DI), and 459-460 (DA). 2 disordered regions span residues 500–522 (PDQN…GHVD) and 534–582 (KKKL…DAPR). 3 stretches are compositionally biased toward basic and acidic residues: residues 513–522 (RESDRVGHVD), 539–550 (HADTNDPLEERP), and 569–582 (TNND…DAPR). Asn-603 contacts S-adenosyl-L-methionine.

Belongs to the class I-like SAM-binding methyltransferase superfamily. TRM5/TYW2 family. Monomer.

The protein localises to the mitochondrion matrix. It localises to the nucleus. Its subcellular location is the cytoplasm. The catalysed reaction is guanosine(37) in tRNA + S-adenosyl-L-methionine = N(1)-methylguanosine(37) in tRNA + S-adenosyl-L-homocysteine + H(+). Functionally, specifically methylates the N1 position of guanosine-37 in various cytoplasmic and mitochondrial tRNAs. Methylation is not dependent on the nature of the nucleoside 5' of the target nucleoside. This is the first step in the biosynthesis of wybutosine (yW), a modified base adjacent to the anticodon of tRNAs and required for accurate decoding. The chain is tRNA (guanine(37)-N(1))-methyltransferase from Plasmodium knowlesi (strain H).